We begin with the raw amino-acid sequence, 118 residues long: Elongin-B (118 aa).

N-acetylmethionine is present on M1. One can recognise a Ubiquitin-like domain in the interval 1–79 (MDVFLMIRRH…QAPATVGLAF (79 aa)). Position 84 is a phosphothreonine (T84). The segment at 91 to 118 (EPFSSPPELPDVMKPQDSGGSANEQAVQ) is disordered. Phosphoserine occurs at positions 108 and 111. A compositionally biased stretch (polar residues) spans 108-118 (SGGSANEQAVQ).

Belongs to the Elongin B family. Heterotrimer of an A (ELOA, ELOA2 or ELOA3P), ELOB and ELOC subunit. The elongin BC complex interacts with EPOP; leading to recruit the elongin BC complex to Polycomb group (PcG) target genes, thereby restricting excessive activity of the PRC2/EED-EZH2 complex. Component of multiple cullin-RING E3 ubiquitin-protein ligase complexes composed of Elongin BC (ELOB and ELOC), a cullin (either CUL2 or CUL5), a catalytic subunit (either RBX1 or RNF7/RBX2), as well as a substrate adapter protein that can be either ASB2, ASB9, ASB11, KLHDC2, KLHDC3, KLHDC10, APPBP2, FEM1A, FEM1B, FEM1C, LRR1, PCMTD1, SOCS1, SOCS2, SOCS5, SPSB1, SPSB3, ELOA, VHL, WSB1 or RAB40C. As part of the Elongin BC E3 ubiquitin ligase complex; interacts with NRBP1. May also interact with DCUN1D1, DCUN1D2, DCUN1D3 and DCUN1D5. May form oligomers as a KLHDC2/KLHDC3-ELOB-ELOC complex; this interaction is autoinhibitory for the E3 ligase complex as the substrate-binding site of KLHDC2/KLHDC3 is blocked in the oligomer.

It localises to the nucleus. It participates in protein modification; protein ubiquitination. Functionally, SIII, also known as elongin, is a general transcription elongation factor that increases the RNA polymerase II transcription elongation past template-encoded arresting sites. Subunit A is transcriptionally active and its transcription activity is strongly enhanced by binding to the dimeric complex of the SIII regulatory subunits B and C (elongin BC complex). In embryonic stem cells, the elongin BC complex is recruited by EPOP to Polycomb group (PcG) target genes in order generate genomic region that display both active and repressive chromatin properties, an important feature of pluripotent stem cells. Its function is as follows. Core component of multiple cullin-2 and cullin-5-RING E3 ubiquitin-protein ligase complexes (ECS complexes), which mediate the ubiquitination of target proteins. By binding to BC-box motifs it seems to link target recruitment subunits, like VHL and members of the SOCS box family, to Cullin/RBX1 modules that activate E2 ubiquitination enzymes. Component the von Hippel-Lindau ubiquitination complex CBC(VHL). A number of ECS complexes (containing either KLHDC2, KLHDC3, KLHDC10, APPBP2, FEM1A, FEM1B or FEM1C as substrate-recognition component) are part of the DesCEND (destruction via C-end degrons) pathway, which recognizes a C-degron located at the extreme C terminus of target proteins, leading to their ubiquitination and degradation. The ECS(ASB9) complex mediates ubiquitination and degradation of CKB. As part of a multisubunit ubiquitin ligase complex, polyubiquitinates monoubiquitinated POLR2A. ECS(LRR1) ubiquitinates MCM7 and promotes CMG replisome disassembly by VCP and chromatin extraction during S-phase. As part of the ECS(RAB40C) complex, mediates ANKRD28 ubiquitination and degradation, thereby inhibiting protein phosphatase 6 (PP6) complex activity and focal adhesion assembly during cell migration. The polypeptide is Elongin-B (Mus musculus (Mouse)).